Consider the following 411-residue polypeptide: Argininosuccinate synthase (411 aa).

ATP-binding positions include 13–21 (AYSGGLDTS) and alanine 40. Positions 91 and 96 each coordinate L-citrulline. Position 121 (glycine 121) interacts with ATP. L-aspartate contacts are provided by threonine 123, asparagine 127, and aspartate 128. L-citrulline is bound at residue asparagine 127. The L-citrulline site is built by arginine 131, serine 182, serine 191, glutamate 267, and tyrosine 279.

This sequence belongs to the argininosuccinate synthase family. Type 1 subfamily. In terms of assembly, homotetramer.

It is found in the cytoplasm. It catalyses the reaction L-citrulline + L-aspartate + ATP = 2-(N(omega)-L-arginino)succinate + AMP + diphosphate + H(+). It functions in the pathway amino-acid biosynthesis; L-arginine biosynthesis; L-arginine from L-ornithine and carbamoyl phosphate: step 2/3. This Bartonella tribocorum (strain CIP 105476 / IBS 506) protein is Argininosuccinate synthase.